The chain runs to 39 residues: Protein YkiC (39 aa).

The helical transmembrane segment at 13–35 (LLSAKLCNCTQAIMTHIIASFLA) threads the bilayer.

It localises to the cell inner membrane. In Escherichia coli (strain K12), this protein is Protein YkiC.